The following is a 585-amino-acid chain: Ras-specific guanine nucleotide-releasing factor RalGPS1 (585 aa).

Residues 50 to 289 (TPEEFASQIT…YKLSLRIEPG (240 aa)) form the Ras-GEF domain. Disordered stretches follow at residues 289–342 (GSSS…KSHS) and 378–410 (RSPR…SEEM). The span at 303-312 (AGPSAGSSSA) shows a compositional bias: low complexity. Positions 330-333 (PTPP) match the PXXP motif. Polar residues predominate over residues 385 to 396 (THTSSTAITNGL). Residues 459 to 571 (VPTMEGPLRR…WHKHLDDACK (113 aa)) form the PH domain. A required for stimulation of nucleotide exchange by RALA region spans residues 461 to 585 (TMEGPLRRKT…QVPANLMSFE (125 aa)).

As to quaternary structure, interacts with the SH3 domains of GRB2, NCK1, PLCG1 and SRC.

The protein localises to the cytoplasm. The protein resides in the cell membrane. Its function is as follows. Guanine nucleotide exchange factor for the small GTPase RALA. May be involved in cytoskeleton organization. This is Ras-specific guanine nucleotide-releasing factor RalGPS1 (Ralgps1) from Mus musculus (Mouse).